Reading from the N-terminus, the 298-residue chain is GTPase Era (298 aa).

The Era-type G domain maps to 8-176; it reads HCGSVAVIGR…VRDVLKLLPE (169 aa). Residues 16-23 form a G1 region; that stretch reads GRPNVGKS. 16-23 contributes to the GTP binding site; the sequence is GRPNVGKS. The segment at 42 to 46 is G2; that stretch reads QTTRH. The tract at residues 63 to 66 is G3; that stretch reads DTPG. Residues 63-67 and 125-128 contribute to the GTP site; these read DTPGL and NKID. Positions 125–128 are G4; sequence NKID. Positions 155–157 are G5; sequence ISA. One can recognise a KH type-2 domain in the interval 199-283; the sequence is VREQLMRQLG…FLETWVRVRE (85 aa).

Belongs to the TRAFAC class TrmE-Era-EngA-EngB-Septin-like GTPase superfamily. Era GTPase family. Monomer.

It is found in the cytoplasm. Its subcellular location is the cell inner membrane. Functionally, an essential GTPase that binds both GDP and GTP, with rapid nucleotide exchange. Plays a role in 16S rRNA processing and 30S ribosomal subunit biogenesis and possibly also in cell cycle regulation and energy metabolism. The sequence is that of GTPase Era from Stenotrophomonas maltophilia (strain K279a).